Reading from the N-terminus, the 89-residue chain is Small ribosomal subunit protein bS20 (89 aa).

Disordered stretches follow at residues 1 to 25 (MANI…ASMK) and 69 to 89 (KNAA…IQAS). Residues 7–20 (AIKRAKTSEKRRAH) show a composition bias toward basic residues.

The protein belongs to the bacterial ribosomal protein bS20 family.

In terms of biological role, binds directly to 16S ribosomal RNA. The sequence is that of Small ribosomal subunit protein bS20 from Geobacillus kaustophilus (strain HTA426).